Reading from the N-terminus, the 513-residue chain is Putative thymidine phosphorylase (513 aa).

It belongs to the thymidine/pyrimidine-nucleoside phosphorylase family. Type 2 subfamily.

The enzyme catalyses thymidine + phosphate = 2-deoxy-alpha-D-ribose 1-phosphate + thymine. This chain is Putative thymidine phosphorylase, found in Rhodopseudomonas palustris (strain BisA53).